The following is a 286-amino-acid chain: Expansin-B4 (286 aa).

Positions 1 to 24 (MGSLSSLAAAAVFLSLLAVGHCAA) are cleaved as a signal peptide. N-linked (GlcNAc...) asparagine glycans are attached at residues Asn-28 and Asn-44. The region spanning 75-181 (GGACGFKHTN…TRVPCEFPGL (107 aa)) is the Expansin-like EG45 domain. Cystine bridges form between Cys-78–Cys-106, Cys-109–Cys-176, and Cys-114–Cys-120. The Expansin-like CBD domain maps to 194 to 281 (VYFAVLVEYE…NWRPNTFYRS (88 aa)). Asn-257 carries N-linked (GlcNAc...) asparagine glycosylation.

It belongs to the expansin family. Expansin B subfamily. As to expression, expressed in internodes.

It is found in the secreted. Its subcellular location is the cell wall. The protein localises to the membrane. In terms of biological role, may cause loosening and extension of plant cell walls by disrupting non-covalent bonding between cellulose microfibrils and matrix glucans. No enzymatic activity has been found. May be required for rapid internodal elongation in deepwater rice during submergence. The chain is Expansin-B4 (EXPB4) from Oryza sativa subsp. japonica (Rice).